The sequence spans 107 residues: Integration host factor subunit beta (107 aa).

The disordered stretch occupies residues 54–107 (NRRPARVGRNPKSGEKVQVPEKHVPHFKPGKELRERVDGRAGEPLKNDEPEDGQ). Residues 65–101 (KSGEKVQVPEKHVPHFKPGKELRERVDGRAGEPLKND) show a composition bias toward basic and acidic residues.

The protein belongs to the bacterial histone-like protein family. Heterodimer of an alpha and a beta chain.

Functionally, this protein is one of the two subunits of integration host factor, a specific DNA-binding protein that functions in genetic recombination as well as in transcriptional and translational control. In Burkholderia thailandensis (strain ATCC 700388 / DSM 13276 / CCUG 48851 / CIP 106301 / E264), this protein is Integration host factor subunit beta.